A 391-amino-acid polypeptide reads, in one-letter code: Probable methanogen homoaconitase large subunit (391 aa).

[4Fe-4S] cluster is bound by residues C275, C333, and C336.

Belongs to the aconitase/IPM isomerase family. LeuC type 2 subfamily. In terms of assembly, heterotetramer of 2 HacA and 2 HacB proteins.

The catalysed reaction is (2R)-homocitrate = (2R,3S)-homoisocitrate. It carries out the reaction (2R)-homocitrate = cis-homoaconitate + H2O. It catalyses the reaction (2R,3S)-homoisocitrate = cis-homoaconitate + H2O. The enzyme catalyses cis-(homo)2aconitate + H2O = (2R,3S)-iso(homo)2citrate. The catalysed reaction is cis-(homo)3aconitate + H2O = (2R,3S)-iso(homo)3citrate. It participates in organic acid metabolism; 2-oxosuberate biosynthesis. Component of a hydro-lyase with broad substrate specificity for cis-unsaturated tricarboxylic acids. Catalyzes both the reversible dehydration of (R)-homocitrate ((R)-2-hydroxybutane-1,2,4-tricarboxylate) to produce cis-homoaconitate ((Z)-but-1-ene-1,2,4-tricarboxylate), and its hydration to homoisocitrate ((1R,2S)-1-hydroxybutane-1,2,4-tricarboxylate). Is also able to hydrate the analogous longer chain substrates cis-homo(2)-aconitate, cis-homo(3)-aconitate. These reactions are part of the biosynthesis pathway of coenzyme B. The polypeptide is Probable methanogen homoaconitase large subunit (hacA) (Methanosarcina mazei (strain ATCC BAA-159 / DSM 3647 / Goe1 / Go1 / JCM 11833 / OCM 88) (Methanosarcina frisia)).